The primary structure comprises 388 residues: Chorismate synthase (388 aa).

Residues R39 and R45 each contribute to the NADP(+) site. Residues 130–132 (RSS), 251–252 (NA), G296, 311–315 (KPIPT), and R337 contribute to the FMN site.

This sequence belongs to the chorismate synthase family. As to quaternary structure, homotetramer. Requires FMNH2 as cofactor.

It catalyses the reaction 5-O-(1-carboxyvinyl)-3-phosphoshikimate = chorismate + phosphate. It participates in metabolic intermediate biosynthesis; chorismate biosynthesis; chorismate from D-erythrose 4-phosphate and phosphoenolpyruvate: step 7/7. Its function is as follows. Catalyzes the anti-1,4-elimination of the C-3 phosphate and the C-6 proR hydrogen from 5-enolpyruvylshikimate-3-phosphate (EPSP) to yield chorismate, which is the branch point compound that serves as the starting substrate for the three terminal pathways of aromatic amino acid biosynthesis. This reaction introduces a second double bond into the aromatic ring system. In Geobacillus sp. (strain WCH70), this protein is Chorismate synthase.